Reading from the N-terminus, the 144-residue chain is Large ribosomal subunit protein uL13 (144 aa).

This sequence belongs to the universal ribosomal protein uL13 family. As to quaternary structure, part of the 50S ribosomal subunit.

Functionally, this protein is one of the early assembly proteins of the 50S ribosomal subunit, although it is not seen to bind rRNA by itself. It is important during the early stages of 50S assembly. The chain is Large ribosomal subunit protein uL13 from Clostridium botulinum (strain Alaska E43 / Type E3).